The chain runs to 204 residues: Cytochrome c biogenesis ATP-binding export protein CcmA (204 aa).

Residues 2–204 enclose the ABC transporter domain; sequence IEVRDLGVSR…LDAEDLGGFL (203 aa). An ATP-binding site is contributed by 34 to 41; sequence GPNGIGKT.

Belongs to the ABC transporter superfamily. CcmA exporter (TC 3.A.1.107) family. As to quaternary structure, the complex is composed of two ATP-binding proteins (CcmA) and two transmembrane proteins (CcmB).

It is found in the cell inner membrane. It carries out the reaction heme b(in) + ATP + H2O = heme b(out) + ADP + phosphate + H(+). Its function is as follows. Part of the ABC transporter complex CcmAB involved in the biogenesis of c-type cytochromes; once thought to export heme, this seems not to be the case, but its exact role is uncertain. Responsible for energy coupling to the transport system. The chain is Cytochrome c biogenesis ATP-binding export protein CcmA from Ruegeria sp. (strain TM1040) (Silicibacter sp.).